A 518-amino-acid polypeptide reads, in one-letter code: Xylose import ATP-binding protein XylG (518 aa).

2 ABC transporter domains span residues 6 to 245 (LQMN…VGRE) and 262 to 507 (FEAR…LSHS). 38–45 (GENGAGKS) is an ATP binding site.

Belongs to the ABC transporter superfamily. Xylose importer (TC 3.A.1.2.4) family. As to quaternary structure, the complex is composed of two ATP-binding proteins (XylG), two transmembrane proteins (XylH) and a solute-binding protein (XylF).

It is found in the cell inner membrane. The catalysed reaction is D-xylose(out) + ATP + H2O = D-xylose(in) + ADP + phosphate + H(+). Its function is as follows. Part of the ABC transporter complex XylFGH involved in xylose import. Responsible for energy coupling to the transport system. This is Xylose import ATP-binding protein XylG from Pseudomonas syringae pv. syringae (strain B728a).